The chain runs to 24 residues: GWASKIGTQLGKMAKVGLKEFVQS.

As to expression, expressed by the skin glands.

The protein resides in the secreted. Functionally, has antimicrobial activity against Gram-negative bacterium E.coli ATCC 25922 (MIC=100 uM), Gram-positive bacterium S.auerus ATCC 25923 (MIC=25 uM). This is Xenoposin precursor fragment B2 from Xenopus borealis (Kenyan clawed frog).